Reading from the N-terminus, the 138-residue chain is Basic phospholipase A2 BP-I (138 aa).

The signal sequence occupies residues 1-16 (MRTLWIMAVLLLGVDG). Intrachain disulfides connect C42/C132, C44/C60, C59/C112, C65/C138, C66/C105, C73/C98, and C91/C103. Ca(2+) is bound by residues G45 and G47. H63 is an active-site residue. The active site involves D106.

It belongs to the phospholipase A2 family. Group II subfamily. K49 sub-subfamily. The cofactor is Ca(2+). As to expression, expressed by the venom gland.

It is found in the secreted. It catalyses the reaction a 1,2-diacyl-sn-glycero-3-phosphocholine + H2O = a 1-acyl-sn-glycero-3-phosphocholine + a fatty acid + H(+). In terms of biological role, snake venom phospholipase A2 (PLA2) that has strong myotoxic activity with a low phospholipase A2 activity. PLA2 catalyzes the calcium-dependent hydrolysis of the 2-acyl groups in 3-sn-phosphoglycerides. This chain is Basic phospholipase A2 BP-I, found in Protobothrops flavoviridis (Habu).